Consider the following 414-residue polypeptide: Isocitrate dehydrogenase [NADP] cytoplasmic (414 aa).

N-acetylserine is present on S2. Y42 is modified (phosphotyrosine). 75–77 contacts NADP(+); it reads TIT. Residue T77 participates in substrate binding. At K81 the chain carries N6-acetyllysine. NADP(+) is bound at residue R82. Substrate-binding positions include 94–100 and R109; that span reads SPNGTIR. At K126 the chain carries N6-succinyllysine. The substrate site is built by R132 and K212. An N6-acetyllysine mark is found at K224, K233, and K243. Mn(2+) is bound at residue D252. K260 serves as a coordination point for NADP(+). Mn(2+)-binding residues include D275 and D279. NADP(+) is bound at residue 310–315; it reads GTVTRH. K321 carries the N6-acetyllysine modification. N328 contributes to the NADP(+) binding site. S389 bears the Phosphoserine mark. The residue at position 400 (K400) is an N6-succinyllysine.

It belongs to the isocitrate and isopropylmalate dehydrogenases family. Homodimer. Requires Mg(2+) as cofactor. Mn(2+) is required as a cofactor. In terms of processing, acetylation at Lys-374 dramatically reduces catalytic activity. As to expression, highly expressed in the liver followed by kidney, lower expression in spleen, brain and lung.

It localises to the cytoplasm. It is found in the cytosol. It catalyses the reaction D-threo-isocitrate + NADP(+) = 2-oxoglutarate + CO2 + NADPH. With respect to regulation, irreversibly inhibited by Cd(2+) concentrations above 50 uM. Catalyzes the NADP(+)-dependent oxidative decarboxylation of isocitrate (D-threo-isocitrate) to 2-ketoglutarate (2-oxoglutarate), which is required by other enzymes such as the phytanoyl-CoA dioxygenase. Plays a critical role in the generation of NADPH, an important cofactor in many biosynthesis pathways. May act as a corneal epithelial crystallin and may be involved in maintaining corneal epithelial transparency. This chain is Isocitrate dehydrogenase [NADP] cytoplasmic (Idh1), found in Mus musculus (Mouse).